An 81-amino-acid polypeptide reads, in one-letter code: Large ribosomal subunit protein bL27 (81 aa).

The tract at residues Met1–Gly22 is disordered.

It belongs to the bacterial ribosomal protein bL27 family.

This Opitutus terrae (strain DSM 11246 / JCM 15787 / PB90-1) protein is Large ribosomal subunit protein bL27.